The following is a 67-amino-acid chain: Conotoxin Cal12.1p2 (67 aa).

A propeptide spanning residues 1–21 is cleaved from the precursor; the sequence is DLITNSYTRGKPRHVTSWRNL.

Post-translationally, contains 4 disulfide bonds. As to expression, expressed by the venom duct.

It is found in the secreted. The sequence is that of Conotoxin Cal12.1p2 from Californiconus californicus (California cone).